We begin with the raw amino-acid sequence, 356 residues long: Histidinol-phosphate aminotransferase (356 aa).

The residue at position 214 (Lys214) is an N6-(pyridoxal phosphate)lysine.

It belongs to the class-II pyridoxal-phosphate-dependent aminotransferase family. Histidinol-phosphate aminotransferase subfamily. Homodimer. Pyridoxal 5'-phosphate is required as a cofactor.

It carries out the reaction L-histidinol phosphate + 2-oxoglutarate = 3-(imidazol-4-yl)-2-oxopropyl phosphate + L-glutamate. Its pathway is amino-acid biosynthesis; L-histidine biosynthesis; L-histidine from 5-phospho-alpha-D-ribose 1-diphosphate: step 7/9. This Escherichia coli (strain 55989 / EAEC) protein is Histidinol-phosphate aminotransferase.